We begin with the raw amino-acid sequence, 67 residues long: Large ribosomal subunit protein uL29 (67 aa).

It belongs to the universal ribosomal protein uL29 family.

In Methanosarcina acetivorans (strain ATCC 35395 / DSM 2834 / JCM 12185 / C2A), this protein is Large ribosomal subunit protein uL29.